The primary structure comprises 357 residues: Thiamine thiazole synthase 3, chloroplastic (357 aa).

A chloroplast-targeting transit peptide spans 1 to 51 (MSISAAGVATGLGANVELKSNVGSSSSSVAGVRLFTSRKAQLRRCAAPATS). Residues alanine 103, 123–124 (EQ), glycine 131, and alanine 196 each bind substrate. Cysteine 225 is modified (2,3-didehydroalanine (Cys)). Substrate contacts are provided by residues aspartate 227, histidine 242, methionine 294, and 304–306 (RMG).

It belongs to the THI4 family. Homooctamer. Fe cation serves as cofactor. Post-translationally, during the catalytic reaction, a sulfide is transferred from Cys-225 to a reaction intermediate, generating a dehydroalanine residue.

It is found in the plastid. Its subcellular location is the chloroplast. The enzyme catalyses [ADP-thiazole synthase]-L-cysteine + glycine + NAD(+) = [ADP-thiazole synthase]-dehydroalanine + ADP-5-ethyl-4-methylthiazole-2-carboxylate + nicotinamide + 3 H2O + 2 H(+). Functionally, involved in biosynthesis of the thiamine precursor thiazole. Catalyzes the conversion of NAD and glycine to adenosine diphosphate 5-(2-hydroxyethyl)-4-methylthiazole-2-carboxylic acid (ADT), an adenylated thiazole intermediate. The reaction includes an iron-dependent sulfide transfer from a conserved cysteine residue of the protein to a thiazole intermediate. The enzyme can only undergo a single turnover, which suggests it is a suicide enzyme. May have additional roles in adaptation to various stress conditions and in DNA damage tolerance. The chain is Thiamine thiazole synthase 3, chloroplastic from Physcomitrium patens (Spreading-leaved earth moss).